A 122-amino-acid chain; its full sequence is Proximal tubules-expressed gene protein (122 aa).

A helical transmembrane segment spans residues 33–53; it reads WLTGLIAMTVFLFLVLVVYVA.

It belongs to the PDZK1-interacting protein 1/SMIM24 family. As to expression, expressed in prospective pronephric mesoderm at the late gastrula stage. After neurulation, expressed in the intermediate mesoderm, eye placode and blood islands. Expression becomes restricted to the pronephric proximal tubule during embryogenesis, but is absent from the connecting tubules.

The protein resides in the membrane. Functionally, essential for pronephric tubule development, acting upstream of pax8 and lhx1/lim1 and downstream of retinoic acid signaling to induce pronephric mesoderm to form pronephric tubule-specific cells. The chain is Proximal tubules-expressed gene protein (pteg) from Xenopus laevis (African clawed frog).